We begin with the raw amino-acid sequence, 243 residues long: Triosephosphate isomerase (243 aa).

9 to 11 (NWK) contributes to the substrate binding site. Residue histidine 96 is the Electrophile of the active site. The active-site Proton acceptor is glutamate 165. Residues glycine 171, serine 204, and 225–226 (GG) each bind substrate.

It belongs to the triosephosphate isomerase family. Homodimer.

It localises to the cytoplasm. The enzyme catalyses D-glyceraldehyde 3-phosphate = dihydroxyacetone phosphate. It participates in carbohydrate biosynthesis; gluconeogenesis. It functions in the pathway carbohydrate degradation; glycolysis; D-glyceraldehyde 3-phosphate from glycerone phosphate: step 1/1. In terms of biological role, involved in the gluconeogenesis. Catalyzes stereospecifically the conversion of dihydroxyacetone phosphate (DHAP) to D-glyceraldehyde-3-phosphate (G3P). The sequence is that of Triosephosphate isomerase from Synechococcus sp. (strain CC9902).